Consider the following 389-residue polypeptide: Exodeoxyribonuclease 7 large subunit (389 aa).

The protein belongs to the XseA family. Heterooligomer composed of large and small subunits.

The protein localises to the cytoplasm. It carries out the reaction Exonucleolytic cleavage in either 5'- to 3'- or 3'- to 5'-direction to yield nucleoside 5'-phosphates.. In terms of biological role, bidirectionally degrades single-stranded DNA into large acid-insoluble oligonucleotides, which are then degraded further into small acid-soluble oligonucleotides. This chain is Exodeoxyribonuclease 7 large subunit, found in Pseudothermotoga lettingae (strain ATCC BAA-301 / DSM 14385 / NBRC 107922 / TMO) (Thermotoga lettingae).